Consider the following 464-residue polypeptide: Ribosomal protein uS12 methylthiotransferase RimO (464 aa).

In terms of domain architecture, MTTase N-terminal spans 14 to 125 (PTVAFAHLGC…IVEVLQRVEA (112 aa)). C23, C59, C88, C163, C167, and C170 together coordinate [4Fe-4S] cluster. Residues 149 to 378 (TTDQAVAFLK…MALQQPISAE (230 aa)) form the Radical SAM core domain. The TRAM domain maps to 381-452 (HSWVSRTVDV…VYDLSGRIVG (72 aa)).

It belongs to the methylthiotransferase family. RimO subfamily. Requires [4Fe-4S] cluster as cofactor.

The protein localises to the cytoplasm. The enzyme catalyses L-aspartate(89)-[ribosomal protein uS12]-hydrogen + (sulfur carrier)-SH + AH2 + 2 S-adenosyl-L-methionine = 3-methylsulfanyl-L-aspartate(89)-[ribosomal protein uS12]-hydrogen + (sulfur carrier)-H + 5'-deoxyadenosine + L-methionine + A + S-adenosyl-L-homocysteine + 2 H(+). Its function is as follows. Catalyzes the methylthiolation of an aspartic acid residue of ribosomal protein uS12. The protein is Ribosomal protein uS12 methylthiotransferase RimO of Parasynechococcus marenigrum (strain WH8102).